The primary structure comprises 83 residues: Gas vesicle protein G (83 aa).

Belongs to the gas vesicle GvpG family. GvpF to GvpM interact with each other in vitro, and may form multi-subunit complex(es).

It localises to the gas vesicle. Its function is as follows. Proteins GvpF to GvpM might be involved in nucleating gas vesicle formation. A minor component of the gas vesicle. Gas vesicles are hollow, gas filled proteinaceous nanostructures found in some microorganisms. They allow positioning of halobacteria at the optimal depth for growth in the poorly aerated, shallow brine pools of their habitat. Functionally, expression of a 9.5 kb mc-vac DNA fragment containing 2 divergently transcribed regions (gvpD-gvpE-gvpF-gvpG-gvpH-gvpI-gvpJ-gvpK-gvpL-gvpM and gvpA-gvpC-gvpN-gvpO) allows H.volcanii to produce gas vesicles. This chain is Gas vesicle protein G, found in Haloferax mediterranei (strain ATCC 33500 / DSM 1411 / JCM 8866 / NBRC 14739 / NCIMB 2177 / R-4) (Halobacterium mediterranei).